Consider the following 327-residue polypeptide: Biotin synthase (327 aa).

The Radical SAM core domain occupies 49–275 (RFGREVSLCS…VNPHAEVRMA (227 aa)). [4Fe-4S] cluster is bound by residues C67, C71, and C74. [2Fe-2S] cluster-binding residues include S112, C143, C203, and R273.

It belongs to the radical SAM superfamily. Biotin synthase family. As to quaternary structure, homodimer. [4Fe-4S] cluster serves as cofactor. The cofactor is [2Fe-2S] cluster.

The enzyme catalyses (4R,5S)-dethiobiotin + (sulfur carrier)-SH + 2 reduced [2Fe-2S]-[ferredoxin] + 2 S-adenosyl-L-methionine = (sulfur carrier)-H + biotin + 2 5'-deoxyadenosine + 2 L-methionine + 2 oxidized [2Fe-2S]-[ferredoxin]. The protein operates within cofactor biosynthesis; biotin biosynthesis; biotin from 7,8-diaminononanoate: step 2/2. Its function is as follows. Catalyzes the conversion of dethiobiotin (DTB) to biotin by the insertion of a sulfur atom into dethiobiotin via a radical-based mechanism. The protein is Biotin synthase of Maridesulfovibrio salexigens (strain ATCC 14822 / DSM 2638 / NCIMB 8403 / VKM B-1763) (Desulfovibrio salexigens).